Consider the following 251-residue polypeptide: Mast cell protease 3 (251 aa).

The N-terminal stretch at 1–17 is a signal peptide; the sequence is MVLFLLLVALLSPAGEA. The propeptide at 18–19 is activation peptide; that stretch reads GK. One can recognise a Peptidase S1 domain in the interval 20-243; it reads IIGGHEAKPH…FLSWIQRTMR (224 aa). A disulfide bridge links C48 with C64. The Charge relay system role is filled by H63. Residue N70 is glycosylated (N-linked (GlcNAc...) asparagine). D107 serves as the catalytic Charge relay system. 2 disulfide bridges follow: C141/C207 and C172/C186. Residue S201 is the Charge relay system of the active site.

The protein belongs to the peptidase S1 family. Granzyme subfamily.

The protein resides in the secreted. It localises to the cytoplasmic granule. The polypeptide is Mast cell protease 3 (Ovis aries (Sheep)).